The primary structure comprises 354 residues: DNA ligase C2 (354 aa).

Lys29 serves as the catalytic N6-AMP-lysine intermediate.

This sequence belongs to the ATP-dependent DNA ligase family.

The enzyme catalyses ATP + (deoxyribonucleotide)n-3'-hydroxyl + 5'-phospho-(deoxyribonucleotide)m = (deoxyribonucleotide)n+m + AMP + diphosphate.. In terms of biological role, DNA ligase that seals nicks in double-stranded DNA during DNA replication, DNA recombination and DNA repair. Has weak intrinsic nick joining activities and accumulates DNA-adenylate. Acts as a backup for LigD in the Ku-LigD-dependent NHEJ pathway. This Mycolicibacterium smegmatis (strain ATCC 700084 / mc(2)155) (Mycobacterium smegmatis) protein is DNA ligase C2 (ligC2).